Consider the following 502-residue polypeptide: Tubulin gamma chain (502 aa).

Residues 51 to 68 (ELNNSGSSPQSYPQQTKP) are compositionally biased toward polar residues. The tract at residues 51 to 73 (ELNNSGSSPQSYPQQTKPNGKYR) is disordered. Position 169–175 (169–175 (AGGTGSG)) interacts with GTP. A compositionally biased stretch (acidic residues) spans 473 to 482 (DDEDDLEDGD). The tract at residues 473–502 (DDEDDLEDGDGGGGGNGNGYNNIDDADMGI) is disordered.

This sequence belongs to the tubulin family.

The protein localises to the cytoplasm. Its subcellular location is the cytoskeleton. It is found in the microtubule organizing center. The protein resides in the spindle pole body. Tubulin is the major constituent of microtubules. The gamma chain is found at microtubule organizing centers (MTOC) such as the spindle poles or the centrosome, suggesting that it is involved in the minus-end nucleation of microtubule assembly. In Candida albicans (Yeast), this protein is Tubulin gamma chain (TUB4).